A 288-amino-acid polypeptide reads, in one-letter code: 4-diphosphocytidyl-2-C-methyl-D-erythritol kinase (288 aa).

Lys-8 is an active-site residue. 92–102 (PVAAGMAGGST) contacts ATP. Asp-134 is an active-site residue.

It belongs to the GHMP kinase family. IspE subfamily.

It catalyses the reaction 4-CDP-2-C-methyl-D-erythritol + ATP = 4-CDP-2-C-methyl-D-erythritol 2-phosphate + ADP + H(+). Its pathway is isoprenoid biosynthesis; isopentenyl diphosphate biosynthesis via DXP pathway; isopentenyl diphosphate from 1-deoxy-D-xylulose 5-phosphate: step 3/6. Catalyzes the phosphorylation of the position 2 hydroxy group of 4-diphosphocytidyl-2C-methyl-D-erythritol. The polypeptide is 4-diphosphocytidyl-2-C-methyl-D-erythritol kinase (Clostridium perfringens (strain ATCC 13124 / DSM 756 / JCM 1290 / NCIMB 6125 / NCTC 8237 / Type A)).